We begin with the raw amino-acid sequence, 55 residues long: Large ribosomal subunit protein bL32c (55 aa).

The protein belongs to the bacterial ribosomal protein bL32 family.

Its subcellular location is the plastid. It localises to the chloroplast. This Daucus carota (Wild carrot) protein is Large ribosomal subunit protein bL32c.